The primary structure comprises 303 residues: Growth/differentiation factor 15 (303 aa).

The first 30 residues, 1 to 30 (MAPPALQAQPPGGSQLRFLLFLLLLLLLLS), serve as a signal peptide directing secretion. The propeptide occupies 31-188 (WPSQGDALAM…LRVAAGRGRR (158 aa)). The N-linked (GlcNAc...) asparagine glycan is linked to N71. 4 disulfide bridges follow: C198-C205, C206-C269, C235-C300, and C239-C302.

Belongs to the TGF-beta family. In terms of assembly, homodimer; disulfide-linked. Interacts with GFRAL and RET; ligand of GFRAL, which mediates GDF15 internalization and cellular signaling through interaction with RET via the formation of a 2:2:2 ternary complex composed of GDF15, GFRAL and RET. In terms of tissue distribution, detected in plasma (at protein level). Highly expressed in liver. Expressed in the distal small intestine, colon and kidney. Expressed in skeletal muscle in response to mitochondrial stress. Expressed by cardiomyocytes, expression is highly increased in heart diseases. Also detected in subcutaneous fat.

Its subcellular location is the secreted. Its function is as follows. Hormone produced in response to various stresses to confer information about those stresses to the brain, and trigger an aversive response, characterized by nausea and/or loss of appetite. The aversive response is both required to reduce continuing exposure to those stresses at the time of exposure and to promote avoidance behavior in the future. Acts by binding to its receptor, GFRAL, activating GFRAL-expressing neurons localized in the area postrema and nucleus tractus solitarius of the brainstem. It then triggers the activation of neurons localized within the parabrachial nucleus and central amygdala, which constitutes part of the 'emergency circuit' that shapes responses to stressful conditions. The GDF15-GFRAL signal induces expression of genes involved in metabolism, such as lipid metabolism in adipose tissues. Required for avoidance behavior in response to food allergens: induced downstream of mast cell activation to promote aversion and minimize harmful effects of exposure to noxious substances. In addition to suppress appetite, also promotes weight loss by enhancing energy expenditure in muscle: acts by increasing calcium futile cycling in muscle. Contributes to the effect of metformin, an anti-diabetic drug, on appetite reduction and weight loss: produced in the kidney in response to metformin treatment, thereby activating the GDF15-GFRAL response, leading to reduced appetite and weight. Produced in response to anticancer drugs, such as camptothecin or cisplatin, promoting nausea and contributing to malnutrition. Overproduced in many cancers, promoting anorexia in cancer (cachexia). Responsible for the risk of nausea during pregnancy: high levels of GDF15 during pregnancy, mostly originating from embryos, are associated with increased nausea. Maternal sensitivity to nausea is probably determined by pre-pregnancy exposure to GDF15, females with naturally high level of GDF15 being less susceptible to nausea than female mice with low levels of GDF15 before pregnancy. Promotes metabolic adaptation in response to systemic inflammation caused by bacterial and viral infections in order to promote tissue tolerance and prevent tissue damage. Required for tissue tolerance in response to myocardial infarction by acting as an inhibitor of leukocyte integring activation, thereby protecting against cardiac rupture. Inhibits growth hormone signaling on hepatocytes. This is Growth/differentiation factor 15 from Mus musculus (Mouse).